The following is a 326-amino-acid chain: Transposase InsH for insertion sequence element IS5A (326 aa).

The protein belongs to the transposase 11 family.

Functionally, involved in the transposition of the insertion sequence IS5. The chain is Transposase InsH for insertion sequence element IS5A (insH1) from Escherichia coli (strain K12).